The following is a 294-amino-acid chain: Bifunctional protein FolD (294 aa).

NADP(+)-binding positions include 166–168 (GRS), Ser195, and Ile236.

The protein belongs to the tetrahydrofolate dehydrogenase/cyclohydrolase family. As to quaternary structure, homodimer.

The enzyme catalyses (6R)-5,10-methylene-5,6,7,8-tetrahydrofolate + NADP(+) = (6R)-5,10-methenyltetrahydrofolate + NADPH. It catalyses the reaction (6R)-5,10-methenyltetrahydrofolate + H2O = (6R)-10-formyltetrahydrofolate + H(+). It participates in one-carbon metabolism; tetrahydrofolate interconversion. Functionally, catalyzes the oxidation of 5,10-methylenetetrahydrofolate to 5,10-methenyltetrahydrofolate and then the hydrolysis of 5,10-methenyltetrahydrofolate to 10-formyltetrahydrofolate. In Chloroherpeton thalassium (strain ATCC 35110 / GB-78), this protein is Bifunctional protein FolD.